Reading from the N-terminus, the 361-residue chain is Molybdenum import ATP-binding protein ModC (361 aa).

The ABC transporter domain maps to 1-228 (MLNINIEKQF…EQMRPWVPLQ (228 aa)). 31 to 38 (GRSGAGKT) is a binding site for ATP. Positions 289 to 356 (GSSIRNLLRG…IKGVTMTQMD (68 aa)) constitute a Mop domain.

This sequence belongs to the ABC transporter superfamily. Molybdate importer (TC 3.A.1.8) family. As to quaternary structure, the complex is composed of two ATP-binding proteins (ModC), two transmembrane proteins (ModB) and a solute-binding protein (ModA).

It is found in the cell inner membrane. The catalysed reaction is molybdate(out) + ATP + H2O = molybdate(in) + ADP + phosphate + H(+). Its function is as follows. Part of the ABC transporter complex ModABC involved in molybdenum import. Responsible for energy coupling to the transport system. In Shewanella sp. (strain MR-4), this protein is Molybdenum import ATP-binding protein ModC.